We begin with the raw amino-acid sequence, 299 residues long: Probable lipid kinase YegS (299 aa).

Positions 2–133 constitute a DAGKc domain; it reads ANFPASLLIL…IDMARVNDKT (132 aa). ATP contacts are provided by residues threonine 40, 66–72, and threonine 95; that span reads GDGTINE. 3 residues coordinate Mg(2+): leucine 215, aspartate 218, and leucine 220. Residue glutamate 271 is the Proton acceptor of the active site.

Belongs to the diacylglycerol/lipid kinase family. YegS lipid kinase subfamily. Mg(2+) is required as a cofactor. Requires Ca(2+) as cofactor.

It localises to the cytoplasm. Its function is as follows. Probably phosphorylates lipids; the in vivo substrate is unknown. This chain is Probable lipid kinase YegS, found in Salmonella gallinarum (strain 287/91 / NCTC 13346).